We begin with the raw amino-acid sequence, 64 residues long: Conotoxin VnMRCL-04 (64 aa).

The signal sequence occupies residues 1-22 (MRCLPVFVILLLLIASAPSVDA). Positions 23–48 (RPKTKDDVPLASFHGNAERTLLNILR) are excised as a propeptide. W63 carries the post-translational modification Tryptophan amide.

Belongs to the conotoxin T superfamily. Contains 2 disulfide bonds that can be either 'C1-C3, C2-C4' or 'C1-C4, C2-C3', since these disulfide connectivities have been observed for conotoxins with cysteine framework V (for examples, see AC P0DQQ7 and AC P81755). Expressed by the venom duct.

It localises to the secreted. The chain is Conotoxin VnMRCL-04 from Conus ventricosus (Mediterranean cone).